Reading from the N-terminus, the 80-residue chain is MAAVKKHLRFALVAAITIALLVAGSVADESSEDIDNIVIKTPLDIPRCDSPLCSLFRIGLCGDKCFCVPLPIVGICVPSV.

Positions M1–A27 are cleaved as a signal peptide. Residues D28–D44 constitute a propeptide that is removed on maturation. 3 disulfides stabilise this stretch: C48-C65, C53-C67, and C61-C76.

This sequence belongs to the gympietide family. In terms of tissue distribution, expressed in trichomes, that are stiff epidermal hairs located on the surface of petioles and leaves. Not expressed in other aerial parts.

The protein localises to the secreted. Functionally, neurotoxin certainly responsible for the defensive, persistent, and painful stings of the giant stinging tree. Inhibits inactivation of Nav1.7/SCN9A sodium channel in sensory neurons by directly interacting with TMEM233, a newly described Nav-interacting protein. Has virtually no effect on Nav1.7/SCN9A function in heterologous expression systems and in neurons that do not express TMEM233. Also weakly but significantly affects Nav1.8/SCN10A. Coexpression of TMEM233 with Nav also confers ExTxA sensitivity to Nav1.1-Nav1.6. On the Nav1.7/SCN9A channel, causes a significant hyperpolarizing shift in the voltage dependence of activation. Its effects on Nav currents are irreversible, with no apparent reduction in activity even after repeated wash steps over 30 minutes. In vivo, induces nocifensive behavior in mice (licking or biting and shaking or lifting of the affected paw) lasting for approximately 1 hour. The sequence is that of Moroidotoxin A from Dendrocnide moroides (Gympie stinging tree).